Reading from the N-terminus, the 260-residue chain is 14-3-3-like protein (260 aa).

The protein belongs to the 14-3-3 family.

The polypeptide is 14-3-3-like protein (Pisum sativum (Garden pea)).